Here is a 278-residue protein sequence, read N- to C-terminus: Checkpoint protein HUS1B (278 aa).

Belongs to the HUS1 family. In terms of assembly, interacts with RAD1 and RAD9B. In terms of tissue distribution, expressed strongly in testis, less in spleen, thymus, prostate, colon and leukocytes.

In Homo sapiens (Human), this protein is Checkpoint protein HUS1B (HUS1B).